The chain runs to 206 residues: Putative type I restriction enzyme MpnIIP endonuclease subunit C-terminal part (206 aa).

Its function is as follows. The C-terminal section of a putative type I restriction enzyme that if reconstituted might recognize 5'-GAN(7)TAY-3' and cleave a random distance away. Subunit R is required for both nuclease and ATPase activities, but not for modification. The chain is Putative type I restriction enzyme MpnIIP endonuclease subunit C-terminal part from Mycoplasma pneumoniae (strain ATCC 29342 / M129 / Subtype 1) (Mycoplasmoides pneumoniae).